The primary structure comprises 293 residues: 4-diphosphocytidyl-2-C-methyl-D-erythritol kinase (293 aa).

Lysine 23 is a catalytic residue. 109-119 (PVAAGIGGGSA) provides a ligand contact to ATP. The active site involves aspartate 151.

The protein belongs to the GHMP kinase family. IspE subfamily.

It catalyses the reaction 4-CDP-2-C-methyl-D-erythritol + ATP = 4-CDP-2-C-methyl-D-erythritol 2-phosphate + ADP + H(+). The protein operates within isoprenoid biosynthesis; isopentenyl diphosphate biosynthesis via DXP pathway; isopentenyl diphosphate from 1-deoxy-D-xylulose 5-phosphate: step 3/6. In terms of biological role, catalyzes the phosphorylation of the position 2 hydroxy group of 4-diphosphocytidyl-2C-methyl-D-erythritol. This chain is 4-diphosphocytidyl-2-C-methyl-D-erythritol kinase, found in Rhizorhabdus wittichii (strain DSM 6014 / CCUG 31198 / JCM 15750 / NBRC 105917 / EY 4224 / RW1) (Sphingomonas wittichii).